A 48-amino-acid polypeptide reads, in one-letter code: Disintegrin leucogastin-A (48 aa).

One can recognise a Disintegrin domain in the interval 1–47 (DCASGPCCRDCKFLEEFTICNMARGDDMNDYCNGKTCDCPRNPHKWP). Disulfide bonds link cysteine 2–cysteine 11, cysteine 7–cysteine 32, cysteine 8–cysteine 37, and cysteine 20–cysteine 39. Residues 24-26 (RGD) carry the Cell attachment site motif.

This sequence belongs to the venom metalloproteinase (M12B) family. P-II subfamily. P-IIa sub-subfamily. In terms of assembly, monomer (disintegrin). In terms of tissue distribution, expressed by the venom gland.

It is found in the secreted. In terms of biological role, inhibits ADP-induced human platelet aggregation. The sequence is that of Disintegrin leucogastin-A from Echis leucogaster (Roman's saw-scaled viper).